The following is a 103-amino-acid chain: Protein Rev (103 aa).

Ser5 bears the Phosphoserine; by host CK2 mark. Residues 17-25 (IIKILYQSN) form a homomultimerization region. 2 disordered regions span residues 24–49 (SNPC…RRQA) and 82–103 (IRDP…TKDN). Residues 33-49 (SRNARKNRRRRWRRRQA) carry the Nuclear localization signal and RNA-binding (RRE) motif. The segment covering 35–48 (NARKNRRRRWRRRQ) has biased composition (basic residues). Positions 72 to 83 (VDLPPLEQLNIR) match the Nuclear export signal and binding to XPO1 motif.

Belongs to the HIV-1 REV protein family. In terms of assembly, homomultimer; when bound to the RRE. Multimeric assembly is essential for activity and may involve XPO1. Binds to human KPNB1, XPO1, TNPO1, RANBP5 and IPO7. Interacts with the viral Integrase. Interacts with human KHDRBS1. Interacts with human NAP1; this interaction decreases Rev multimerization and stimulates its activity. Interacts with human DEAD-box helicases DDX3 and DDX24; these interactions may serve for viral RNA export to the cytoplasm and packaging, respectively. Interacts with human PSIP1; this interaction may inhibit HIV-1 DNA integration by promoting dissociation of the Integrase-LEDGF/p75 complex. Asymmetrically arginine dimethylated at one site by host PRMT6. Methylation impairs the RNA-binding activity and export of viral RNA from the nucleus to the cytoplasm. In terms of processing, phosphorylated by protein kinase CK2. Presence of, and maybe binding to the N-terminus of the regulatory beta subunit of CK2 is necessary for CK2-mediated Rev's phosphorylation.

The protein resides in the host nucleus. It is found in the host nucleolus. Its subcellular location is the host cytoplasm. Escorts unspliced or incompletely spliced viral pre-mRNAs (late transcripts) out of the nucleus of infected cells. These pre-mRNAs carry a recognition sequence called Rev responsive element (RRE) located in the env gene, that is not present in fully spliced viral mRNAs (early transcripts). This function is essential since most viral proteins are translated from unspliced or partially spliced pre-mRNAs which cannot exit the nucleus by the pathway used by fully processed cellular mRNAs. Rev itself is translated from a fully spliced mRNA that readily exits the nucleus. Rev's nuclear localization signal (NLS) binds directly to KPNB1/Importin beta-1 without previous binding to KPNA1/Importin alpha-1. KPNB1 binds to the GDP bound form of RAN (Ran-GDP) and targets Rev to the nucleus. In the nucleus, the conversion from Ran-GDP to Ran-GTP dissociates Rev from KPNB1 and allows Rev's binding to the RRE in viral pre-mRNAs. Rev multimerization on the RRE via cooperative assembly exposes its nuclear export signal (NES) to the surface. Rev can then form a complex with XPO1/CRM1 and Ran-GTP, leading to nuclear export of the complex. Conversion from Ran-GTP to Ran-GDP mediates dissociation of the Rev/RRE/XPO1/RAN complex, so that Rev can return to the nucleus for a subsequent round of export. Beside KPNB1, also seems to interact with TNPO1/Transportin-1, RANBP5/IPO5 and IPO7/RANBP7 for nuclear import. The nucleoporin-like HRB/RIP is an essential cofactor that probably indirectly interacts with Rev to release HIV RNAs from the perinuclear region to the cytoplasm. The protein is Protein Rev of Human immunodeficiency virus type 1 group O (isolate MVP5180) (HIV-1).